A 2798-amino-acid polypeptide reads, in one-letter code: Nipped-B-like protein (2798 aa).

Polar residues-rich tracts occupy residues 128 to 173 (LSQN…QNSP) and 191 to 208 (HPSSYTTHPQMQQASVSS). The segment at 128–338 (LSQNSMHSSP…IKLGKDEKDQ (211 aa)) is disordered. Phosphoserine is present on residues Ser150 and Ser162. Over residues 234 to 249 (HHADNPRHGSSDDYLH) the composition is skewed to basic and acidic residues. Phosphoserine is present on residues Ser243, Ser256, Ser274, Ser280, Ser284, Ser301, Ser306, Ser318, and Ser350. The segment covering 482-500 (RESAIERERFSKEVQDKDK) has biased composition (basic and acidic residues). The segment at 482–940 (RESAIERERF…NKAEFPSYLL (459 aa)) is disordered. Over residues 523 to 534 (PASQETGSTGNG) the composition is skewed to polar residues. Basic and acidic residues-rich tracts occupy residues 562-572 (DSIKKPEETKQ), 593-625 (PENHPETPKKKSDPELSKSEMKQNESRLSESKP), 634-663 (KSNESKLETKTETPTEELKQNENKTTESKQ), 672-685 (KQNENRPCDTKPND), and 694-899 (ENTK…DTNK). Residues Thr713 and Thr746 each carry the phosphothreonine modification. Residue Ser906 is modified to Phosphoserine. Over residues 908–933 (NSKDDKRTEGNRSKVDSNKAHTDNKA) the composition is skewed to basic and acidic residues. The PxVxL motif signature appears at 990-1003 (NKGAKPVVVLQKLS). Disordered stretches follow at residues 1011–1041 (IKDREEKSRSSLKSIKNKPSKSNKGSIDQSV) and 1054–1186 (ESTM…TPEE). Lys1076 is subject to N6-acetyllysine. Phosphoserine occurs at positions 1083, 1084, and 1090. The span at 1083–1094 (SSDEDNDSDEAF) shows a compositional bias: acidic residues. Basic and acidic residues predominate over residues 1103–1133 (KDDDKAWEYEERDRRSSGDHRRSGHSHDGRR). Phosphoserine occurs at positions 1144, 1146, and 1148. A Phosphotyrosine modification is found at Tyr1153. At Ser1154 the chain carries Phosphoserine. Positions 1165-1176 (KMKKKEKQKKRK) are enriched in basic residues. Residue Thr1183 is modified to Phosphothreonine. Ser1191 carries the phosphoserine modification. The span at 1685-1705 (AMKSQKDEESSDATHHAKELE) shows a compositional bias: basic and acidic residues. Residues 1685 to 1706 (AMKSQKDEESSDATHHAKELET) form a disordered region. 5 HEAT repeats span residues 1761 to 1799 (AQSFDIYLTQILRVLGENAIAVRTKAMKCLSEVVAVDPS), 1837 to 1875 (PQLAEQYYDMLIERILDTGISVRKRVIKILRDICIEQPT), 1939 to 1978 (YDWFEQLLQNLLKSEEDSSYKPVKKACTQLVDNLVEHILK), 2221 to 2261 (VNLK…LKEM), and 2307 to 2345 (LIHPVQCVPYLIAMGTDPEPAMRNKADQQLVEIDKKYAG). Residues 2467–2483 (VKDKRKERKTSPAKENE) show a composition bias toward basic and acidic residues. 2 disordered regions span residues 2467–2514 (VKDK…DDIN) and 2645–2690 (TSLL…DSTE). Phosphoserine occurs at positions 2487, 2503, 2505, 2507, 2509, 2646, and 2652. Positions 2504–2513 (ESDSDSEDDI) are enriched in acidic residues. Thr2661 is subject to Phosphothreonine. At Ser2666 the chain carries Phosphoserine.

The protein belongs to the SCC2/Nipped-B family. Heterodimerizes with MAU2/SCC4 to form the cohesin loading complex. The NIPBL-MAU2 heterodimer interacts with the cohesin complex composed of SMC1A/B and SMC3 heterodimer, RAD21 and STAG1/SA1. NIPBL directly contacts all members of the complex, RAD21, SMC1A/B, SMC3 and STAG1. Interacts directly (via PxVxL motif) with CBX3 and CBX5. Interacts with ZNF609 (via N-terminus). Interacts with the multiprotein complex Integrator. Interacts with BRD4. In terms of tissue distribution, spermatocytes and oocytes (at protein level).

Its subcellular location is the nucleus. The protein resides in the chromosome. Plays an important role in the loading of the cohesin complex on to DNA. Forms a heterodimeric complex (also known as cohesin loading complex) with MAU2/SCC4 which mediates the loading of the cohesin complex onto chromatin. Plays a role in cohesin loading at sites of DNA damage. Its recruitment to double-strand breaks (DSBs) sites occurs in a CBX3-, RNF8- and RNF168-dependent manner whereas its recruitment to UV irradiation-induced DNA damage sites occurs in a ATM-, ATR-, RNF8- and RNF168-dependent manner. Along with ZNF609, promotes cortical neuron migration during brain development by regulating the transcription of crucial genes in this process. Preferentially binds promoters containing paused RNA polymerase II. Up-regulates the expression of SEMA3A, NRP1, PLXND1 and GABBR2 genes, among others. This is Nipped-B-like protein (Nipbl) from Mus musculus (Mouse).